We begin with the raw amino-acid sequence, 297 residues long: Signal-transducing adaptor protein 1 (297 aa).

Positions 25–121 constitute a PH domain; the sequence is PLYFEGFLLV…WRGFILTVTE (97 aa). The residue at position 170 (Y170) is a Phosphotyrosine. In terms of domain architecture, SH2 spans 179 to 273; that stretch reads ECFYAVSRKE…GNLRPFIHSA (95 aa). The disordered stretch occupies residues 271 to 297; sequence HSADDNFGQDPNIEDRSEKFKKNPHNA.

Interacts with URI1; the interaction is phosphorylation-dependent occurs in a growth-dependent manner. Interacts with KIT and CSF1R. Phosphorylated on tyrosine by TEC. Phosphorylated on tyrosine by KIT. As to expression, expression restricted to the bone marrow.

It is found in the nucleus. The protein resides in the cytoplasm. It localises to the mitochondrion. Its function is as follows. May function as an adapter molecule downstream of KIT in the proliferation or differentiation of hematopoietic stem cells. The sequence is that of Signal-transducing adaptor protein 1 (Stap1) from Mus musculus (Mouse).